The chain runs to 329 residues: Homeobox protein Nkx-3.2 (329 aa).

Positions 107 to 188 (GLGSPCGGAP…PDPSPPDEDP (82 aa)) are disordered. A compositionally biased stretch (gly residues) spans 110-124 (SPCGGAPGAGAGGEP). Residues 138–160 (ELGRPGDIGERKKQRPLEARAKG) are compositionally biased toward basic and acidic residues. Positions 202–261 (KKRSRAAFSHAQVFELERRFNHQRYLSGPERADLAASLKLTETQVKIWFQNRRYKTKRRQ) form a DNA-binding region, homeobox.

The protein belongs to the NK-3 homeobox family. First expressed in developing facial cartilage in early tailbud embryos, with expression localized to the basihyobranchial, palatoquadrate and possibly Meckel's cartilages. Shortly after, a second area of expression is seen in the musculature of the anterior gut. During late embryogenesis, gut expression extends into hindgut tissues. In adults, expressed at a high level in the kidney, pancreas, spleen and stomach and at a slightly lower level in the intestine, skeletal muscle and tongue. Adult heart, liver and lung show little or no expression.

Its subcellular location is the nucleus. In Xenopus laevis (African clawed frog), this protein is Homeobox protein Nkx-3.2 (nkx3-2).